We begin with the raw amino-acid sequence, 837 residues long: Cap-specific mRNA (nucleoside-2'-O-)-methyltransferase 1 (837 aa).

A disordered region spans residues M1–F66. The short motif at K2–R18 is the Bipartite nuclear localization signal element. S27, S30, and S52 each carry phosphoserine. Positions T56–F66 are enriched in basic and acidic residues. Positions Y86–Q132 constitute a G-patch domain. S90 bears the Phosphoserine mark. An N6-acetyllysine modification is found at K107. Substrate contacts are provided by residues K202 to D206 and R217. Residues F230–K449 enclose the RrmJ-type SAM-dependent 2'-O-MTase domain. N233 provides a ligand contact to S-adenosyl-L-methionine. K238 is an active-site residue. Residues C276–F282 and D334–I335 contribute to the S-adenosyl-L-methionine site. D363 is a catalytic residue. N373–Q375 is a substrate binding site. The active-site Proton acceptor is K403. Position 438 (N438) interacts with substrate. Residues S726 to P834 form an interaction with POLR2A region. The WW domain occupies R751–E785.

Interacts with POLR2A (via C-terminus).

It localises to the nucleus. The catalysed reaction is a 5'-end (N(7)-methyl 5'-triphosphoguanosine)-ribonucleoside in mRNA + S-adenosyl-L-methionine = a 5'-end (N(7)-methyl 5'-triphosphoguanosine)-(2'-O-methyl-ribonucleoside) in mRNA + S-adenosyl-L-homocysteine + H(+). S-adenosyl-L-methionine-dependent methyltransferase that mediates mRNA cap1 2'-O-ribose methylation to the 5'-cap structure of mRNAs. Methylates the ribose of the first nucleotide of a m(7)GpppG-capped mRNA and small nuclear RNA (snRNA) to produce m(7)GpppRm (cap1). Displays a preference for cap0 transcripts. Cap1 modification is linked to higher levels of translation. May be involved in the interferon response pathway. This chain is Cap-specific mRNA (nucleoside-2'-O-)-methyltransferase 1 (Cmtr1), found in Mus musculus (Mouse).